Here is a 743-residue protein sequence, read N- to C-terminus: Fork head transcription factor 1 (743 aa).

Residues 39-94 (VTMGRKASNSSDCDVHLGDTKAISRQHAKIFYSFPNQRFEISVMGKNGAFVDGEFV) enclose the FHA domain. Disordered stretches follow at residues 214–291 (QPPK…ATQK), 411–450 (GISA…LQNG), and 529–743 (QMQG…SSYT). Residues 221 to 230 (VSPSSIQRLS) show a composition bias toward polar residues. A DNA-binding region (fork-head) is located at residues 291–385 (KPNLSYANLI…EGNFFRRTKK (95 aa)). Over residues 434 to 443 (SRGENVEDRP) the composition is skewed to basic and acidic residues. A compositionally biased stretch (low complexity) spans 529-539 (QMQGPQQVQQQ). Residues 562–576 (NITSPSPSISVTQRP) are compositionally biased toward polar residues. A compositionally biased stretch (low complexity) spans 614-624 (SAGPSSVRSSS). Composition is skewed to polar residues over residues 625 to 643 (YNST…QNLH), 670 to 686 (TGNQ…ASSF), and 695 to 726 (ENGS…NSSD).

Its subcellular location is the nucleus. Its function is as follows. Acts as a transcriptional activator for ribosomal protein genes (RPG) that contain a HomolE UAS (upstream activating sequence) in addition to a HomolD promoter element; HomolD plays the role of a TATA box in RPG promoters that do not contain a canonical TATA sequence. Binds to HomolE elements with consensus sequence 3'-ACCCTACCCT-5' (or its inverted form AGGGTAGGGT). In Schizosaccharomyces pombe (strain 972 / ATCC 24843) (Fission yeast), this protein is Fork head transcription factor 1.